The primary structure comprises 238 residues: Succinate dehydrogenase iron-sulfur subunit (238 aa).

The region spanning Met-1–Leu-97 is the 2Fe-2S ferredoxin-type domain. Positions 55, 60, and 75 each coordinate [2Fe-2S] cluster. The 4Fe-4S ferredoxin-type domain occupies Gln-139 to Phe-169. The [4Fe-4S] cluster site is built by Cys-149, Cys-152, and Cys-155. Cys-159 is a [3Fe-4S] cluster binding site. Position 164 (Trp-164) interacts with a ubiquinone. Residues Cys-206 and Cys-212 each coordinate [3Fe-4S] cluster. Cys-216 lines the [4Fe-4S] cluster pocket.

It belongs to the succinate dehydrogenase/fumarate reductase iron-sulfur protein family. Part of an enzyme complex containing four subunits: a flavoprotein, an iron-sulfur, cytochrome b-556, and a hydrophobic anchor protein. Requires [2Fe-2S] cluster as cofactor. It depends on [3Fe-4S] cluster as a cofactor. [4Fe-4S] cluster serves as cofactor.

It catalyses the reaction a quinone + succinate = fumarate + a quinol. It functions in the pathway carbohydrate metabolism; tricarboxylic acid cycle; fumarate from succinate (bacterial route): step 1/1. Two distinct, membrane-bound, FAD-containing enzymes are responsible for the catalysis of fumarate and succinate interconversion; the fumarate reductase is used in anaerobic growth, and the succinate dehydrogenase is used in aerobic growth. This is Succinate dehydrogenase iron-sulfur subunit (sdhB) from Salmonella typhimurium (strain LT2 / SGSC1412 / ATCC 700720).